Reading from the N-terminus, the 365-residue chain is tRNA-specific 2-thiouridylase MnmA (365 aa).

ATP contacts are provided by residues A14–S21 and L40. C108 functions as the Nucleophile in the catalytic mechanism. The cysteines at positions 108 and 204 are disulfide-linked. Position 132 (G132) interacts with ATP. Positions K154–Q156 are interaction with tRNA. C204 functions as the Cysteine persulfide intermediate in the catalytic mechanism.

This sequence belongs to the MnmA/TRMU family.

It is found in the cytoplasm. The catalysed reaction is S-sulfanyl-L-cysteinyl-[protein] + uridine(34) in tRNA + AH2 + ATP = 2-thiouridine(34) in tRNA + L-cysteinyl-[protein] + A + AMP + diphosphate + H(+). Functionally, catalyzes the 2-thiolation of uridine at the wobble position (U34) of tRNA, leading to the formation of s(2)U34. This Rickettsia akari (strain Hartford) protein is tRNA-specific 2-thiouridylase MnmA.